The following is a 214-amino-acid chain: Outer-membrane lipoprotein LolB (214 aa).

The first 25 residues, 1–25, serve as a signal peptide directing secretion; sequence MNNLKRLTKTIFSCFTLSALLLLAG. Residue Cys26 is the site of N-palmitoyl cysteine attachment. The S-diacylglycerol cysteine moiety is linked to residue Cys26. The segment covering 143-160 has biased composition (polar residues); that stretch reads QVIESDSQGKPKQLTNTQ. Residues 143-163 are disordered; that stretch reads QVIESDSQGKPKQLTNTQTPP.

Belongs to the LolB family. In terms of assembly, monomer.

The protein localises to the cell outer membrane. In terms of biological role, plays a critical role in the incorporation of lipoproteins in the outer membrane after they are released by the LolA protein. The polypeptide is Outer-membrane lipoprotein LolB (Shewanella baltica (strain OS223)).